The chain runs to 201 residues: Recombination protein RecR (201 aa).

The C4-type zinc-finger motif lies at 57-72; it reads CKYCANFTNKDECDIC. In terms of domain architecture, Toprim spans 80–176; sequence TKLMIVTTNE…QIYRIGFGIP (97 aa).

The protein belongs to the RecR family.

In terms of biological role, may play a role in DNA repair. It seems to be involved in an RecBC-independent recombinational process of DNA repair. It may act with RecF and RecO. The chain is Recombination protein RecR from Ureaplasma parvum serovar 3 (strain ATCC 27815 / 27 / NCTC 11736).